A 277-amino-acid chain; its full sequence is Putative serine/threonine-protein kinase PRKY (277 aa).

Residues 1 to 12 (MEAPGPAQAAAA) show a composition bias toward low complexity. The tract at residues 1–40 (MEAPGPAQAAAAESNSREVTEDAADWAPALCPSPEARSPE) is disordered. The 229-residue stretch at 49–277 (CDALVTMGTG…DFHVKTGRMM (229 aa)) folds into the Protein kinase domain. ATP-binding positions include 55-63 (MGTGTFGRV) and Lys-78. Asp-172 functions as the Proton acceptor in the catalytic mechanism. Thr-203 bears the Phosphothreonine mark.

The protein belongs to the protein kinase superfamily. AGC Ser/Thr protein kinase family. cAMP subfamily. In terms of tissue distribution, ubiquitous.

The enzyme catalyses L-seryl-[protein] + ATP = O-phospho-L-seryl-[protein] + ADP + H(+). It catalyses the reaction L-threonyl-[protein] + ATP = O-phospho-L-threonyl-[protein] + ADP + H(+). In Homo sapiens (Human), this protein is Putative serine/threonine-protein kinase PRKY (PRKY).